Here is a 108-residue protein sequence, read N- to C-terminus: RNA silencing suppressor (108 aa).

The interval R47–R50 is basic. The segment at C57–C78 adopts a C4-type zinc-finger fold.

Belongs to the carlaviruses nucleic acid-binding protein family.

Functionally, suppressor of viral-induced RNA silencing. Increases the accumulation of viral RNA and enhances viral cell-to-cell movement by inhibiting RNA silencing. This Solanum tuberosum (Potato) protein is RNA silencing suppressor.